The following is a 129-amino-acid chain: Small ribosomal subunit protein uS11 (129 aa).

Belongs to the universal ribosomal protein uS11 family. In terms of assembly, part of the 30S ribosomal subunit. Interacts with proteins S7 and S18. Binds to IF-3.

Its function is as follows. Located on the platform of the 30S subunit, it bridges several disparate RNA helices of the 16S rRNA. Forms part of the Shine-Dalgarno cleft in the 70S ribosome. This Thermosipho africanus (strain TCF52B) protein is Small ribosomal subunit protein uS11.